A 496-amino-acid polypeptide reads, in one-letter code: RNA-binding motif protein, Y chromosome, family 1 member B (496 aa).

The RRM domain maps to Gly-8–Lys-85. Disordered stretches follow at residues Asp-67–Tyr-349 and Lys-452–Tyr-496. 2 stretches are compositionally biased toward low complexity: residues Pro-97 to Gly-114 and Pro-149 to Gly-159. Positions Asn-175–Met-184 are enriched in polar residues. 6 stretches are compositionally biased toward basic and acidic residues: residues Arg-204–Gly-214, Asp-242–Ser-253, Ala-276–Tyr-289, Gly-313–Tyr-326, Ser-335–Tyr-349, and Gly-484–Tyr-496.

Interacts with splicing factor proteins SFRS3/SRP20, TRA2B/SFRS10, KHDRBS1/SAM68 and KHDRBS3. Testis-specific.

It localises to the nucleus. Its function is as follows. RNA-binding protein which may be involved in spermatogenesis. Required for sperm development, possibly by participating in pre-mRNA splicing in the testis. The chain is RNA-binding motif protein, Y chromosome, family 1 member B (RBMY1B) from Homo sapiens (Human).